A 213-amino-acid chain; its full sequence is Thiamine-phosphate synthase (213 aa).

Residues 40 to 44 (QFREK) and asparagine 75 each bind 4-amino-2-methyl-5-(diphosphooxymethyl)pyrimidine. Residues aspartate 76 and aspartate 95 each coordinate Mg(2+). Serine 113 is a binding site for 4-amino-2-methyl-5-(diphosphooxymethyl)pyrimidine. 139 to 141 (TPS) lines the 2-[(2R,5Z)-2-carboxy-4-methylthiazol-5(2H)-ylidene]ethyl phosphate pocket. Position 142 (lysine 142) interacts with 4-amino-2-methyl-5-(diphosphooxymethyl)pyrimidine. Residues glycine 171 and 191 to 192 (IS) each bind 2-[(2R,5Z)-2-carboxy-4-methylthiazol-5(2H)-ylidene]ethyl phosphate.

The protein belongs to the thiamine-phosphate synthase family. The cofactor is Mg(2+).

The catalysed reaction is 2-[(2R,5Z)-2-carboxy-4-methylthiazol-5(2H)-ylidene]ethyl phosphate + 4-amino-2-methyl-5-(diphosphooxymethyl)pyrimidine + 2 H(+) = thiamine phosphate + CO2 + diphosphate. It carries out the reaction 2-(2-carboxy-4-methylthiazol-5-yl)ethyl phosphate + 4-amino-2-methyl-5-(diphosphooxymethyl)pyrimidine + 2 H(+) = thiamine phosphate + CO2 + diphosphate. The enzyme catalyses 4-methyl-5-(2-phosphooxyethyl)-thiazole + 4-amino-2-methyl-5-(diphosphooxymethyl)pyrimidine + H(+) = thiamine phosphate + diphosphate. The protein operates within cofactor biosynthesis; thiamine diphosphate biosynthesis; thiamine phosphate from 4-amino-2-methyl-5-diphosphomethylpyrimidine and 4-methyl-5-(2-phosphoethyl)-thiazole: step 1/1. Condenses 4-methyl-5-(beta-hydroxyethyl)thiazole monophosphate (THZ-P) and 2-methyl-4-amino-5-hydroxymethyl pyrimidine pyrophosphate (HMP-PP) to form thiamine monophosphate (TMP). In Staphylococcus aureus (strain JH1), this protein is Thiamine-phosphate synthase.